A 71-amino-acid polypeptide reads, in one-letter code: MANDGSLSDRIDALEMRLSYQDETIETLNQTVTAQWKQIDTLTRQIAALSERLQQAESSVATPANERPPHY.

This sequence belongs to the SlyX family.

This chain is Protein SlyX homolog, found in Rhodopseudomonas palustris (strain BisB5).